The following is a 444-amino-acid chain: Transcription activator AFTR-2 (444 aa).

The segment at residues 16–43 (CDFCTQSKLRCNKNKPSCRRCTLQQQPC) is a DNA-binding region (zn(2)-C6 fungal-type). Positions 49–88 (RRTGRPPKHPRKANDCQEANGQHGDQDPVTSTPGGSYQQQ) are disordered. Residues 50–59 (RTGRPPKHPR) are compositionally biased toward basic residues. Polar residues predominate over residues 76 to 88 (PVTSTPGGSYQQQ).

The protein resides in the nucleus. In terms of biological role, transcription factor that regulates the expression of the gene clusters that mediate the biosynthesis of the host-selective toxins (HSTs) AF-toxins responsible for Alternaria black spot of strawberry disease by the strawberry pathotype. On cellular level, AF-toxins affect plasma membrane of susceptible cells and cause a sudden increase in loss of K(+) after a few minutes of toxin treatment. The polypeptide is Transcription activator AFTR-2 (Alternaria alternata (Alternaria rot fungus)).